Here is a 460-residue protein sequence, read N- to C-terminus: GTPase Der (460 aa).

EngA-type G domains are found at residues Gln-2 to Phe-164 and Ile-196 to Thr-368. Residues Gly-8 to Ser-15, Asp-55 to Leu-59, Asn-116 to Asp-119, Gly-202 to Ser-209, Asp-249 to Ile-253, and Asn-313 to Asp-316 each bind GTP. The 85-residue stretch at Gln-369–Gly-453 folds into the KH-like domain.

It belongs to the TRAFAC class TrmE-Era-EngA-EngB-Septin-like GTPase superfamily. EngA (Der) GTPase family. In terms of assembly, associates with the 50S ribosomal subunit.

Functionally, GTPase that plays an essential role in the late steps of ribosome biogenesis. This chain is GTPase Der, found in Campylobacter jejuni subsp. jejuni serotype O:23/36 (strain 81-176).